The following is a 366-amino-acid chain: UDP-N-acetylenolpyruvoylglucosamine reductase (366 aa).

One can recognise an FAD-binding PCMH-type domain in the interval 29–203; that stretch reads VGPVARTLVT…LEVEFALDAS (175 aa). R177 is an active-site residue. S258 functions as the Proton donor in the catalytic mechanism. The active site involves E358.

Belongs to the MurB family. Requires FAD as cofactor.

It localises to the cytoplasm. The enzyme catalyses UDP-N-acetyl-alpha-D-muramate + NADP(+) = UDP-N-acetyl-3-O-(1-carboxyvinyl)-alpha-D-glucosamine + NADPH + H(+). The protein operates within cell wall biogenesis; peptidoglycan biosynthesis. In terms of biological role, cell wall formation. This chain is UDP-N-acetylenolpyruvoylglucosamine reductase, found in Mycobacterium ulcerans (strain Agy99).